The chain runs to 522 residues: MELFSSQQWLALLPPIILCILLFSYVYIILWLRPERLRQKLRSQGVRGPKPSFLFGNIPEMRRIQQLAKSAHEQEAGSTDMFSSNYVATLFPYFLHWSRVYGSIYLYSTGSIQVLNVTDPNMVKELANCKSLDLGKPCYLQKERGALLGMGILTSNGDLWVHQRKVIAPELFMERVKGMVNLMMEAAMSMLNSWKNEVEDRGGSAEIVVDEFLRTFSADVISRACFGSSFSEGKEIFIKIRQLQKAMAKQSMLIGVPGSRYLPTRSNRGIWNLDSSIRTLILNISKKYEHDSSTSVNKDLLHSIIQGSKDGPFASCTPEDFIVDNCKNIYFAGHETTSTTAAWCLMLLASHHEWQSRARVESLDICQGRPLDFDILRKLKKLTMVIQETLRLYPPASFVAREALNDMKLGGIDIPKGTNIWIPIAMAHRDPSVWGPSADKFDPDRFANGIAGACKPPHMYMPFGVGVRTCAGQNLAMVELKVVLSLLLSKFEFKLSPNYVHCPAFRLTIEPGKGVPLIFREL.

Residues 1-11 (MELFSSQQWLA) lie on the Lumenal side of the membrane. The helical; Signal-anchor for type III membrane protein transmembrane segment at 12–32 (LLPPIILCILLFSYVYIILWL) threads the bilayer. Residues 33–522 (RPERLRQKLR…KGVPLIFREL (490 aa)) are Cytoplasmic-facing. Cysteine 470 contributes to the heme binding site.

This sequence belongs to the cytochrome P450 family. The cofactor is heme.

It localises to the membrane. Functionally, probably not involved in gibberellin metabolism since over-expression of CYP714C2 in a heterologous system does not induce semi-dwarfism. The sequence is that of Cytochrome P450 714C2 (CYP714C2) from Oryza sativa subsp. japonica (Rice).